A 182-amino-acid chain; its full sequence is Gamma-crystallin N (182 aa).

Beta/gamma crystallin 'Greek key' domains are found at residues 6-46 (GKIT…HVES), 47-89 (GAWV…RPVG), and 95-136 (FRLE…KVYG). Residues 153–182 (LSSSLQSDQGPEEATTKPATTQPPFLTANL) are disordered. The segment covering 169-182 (KPATTQPPFLTANL) has biased composition (polar residues).

This sequence belongs to the beta/gamma-crystallin family. As to quaternary structure, monomer. Not specifically expressed in eye.

This chain is Gamma-crystallin N, found in Homo sapiens (Human).